The sequence spans 491 residues: Probable glycine dehydrogenase (decarboxylating) subunit 2 (491 aa).

An N6-(pyridoxal phosphate)lysine modification is found at lysine 274.

The protein belongs to the GcvP family. C-terminal subunit subfamily. The glycine cleavage system is composed of four proteins: P, T, L and H. In this organism, the P 'protein' is a heterodimer of two subunits. The cofactor is pyridoxal 5'-phosphate.

The enzyme catalyses N(6)-[(R)-lipoyl]-L-lysyl-[glycine-cleavage complex H protein] + glycine + H(+) = N(6)-[(R)-S(8)-aminomethyldihydrolipoyl]-L-lysyl-[glycine-cleavage complex H protein] + CO2. The glycine cleavage system catalyzes the degradation of glycine. The P protein binds the alpha-amino group of glycine through its pyridoxal phosphate cofactor; CO(2) is released and the remaining methylamine moiety is then transferred to the lipoamide cofactor of the H protein. This Shouchella clausii (strain KSM-K16) (Alkalihalobacillus clausii) protein is Probable glycine dehydrogenase (decarboxylating) subunit 2.